The following is a 200-amino-acid chain: MGNLFGRKKQSRVTEQDRAILQLKQQRDKLRQYQKRVTQQLERERALARQLLRDGRKERAKLLLKKKRYREQLLDRTENQISSLEAMVQSIEFTQIEMKVMEGLQVGNECLNKMHQVMSIEEVERILDETQEAVEYQRQIDELLAGNFTQEDEDAILEELNAITQEQMELPEVPSEPLPDRNPEAPAKARSRQAELVAAS.

Gly-2 carries the N-myristoyl glycine lipid modification. Positions 10–145 (QSRVTEQDRA…YQRQIDELLA (136 aa)) form a coiled coil. Ser-119 is subject to Phosphoserine. Thr-130 bears the Phosphothreonine mark. The Type-2 MIT-interacting motif motif lies at 168–179 (MELPEVPSEPLP). Residues 168-200 (MELPEVPSEPLPDRNPEAPAKARSRQAELVAAS) form a disordered region.

The protein belongs to the SNF7 family. In terms of assembly, probable core component of the endosomal sorting required for transport complex III (ESCRT-III). ESCRT-III components are thought to multimerize to form a flat lattice on the perimeter membrane of the endosome. Several assembly forms of ESCRT-III may exist that interact and act sequentially. Interacts with VPS4A; the interaction is direct. Interacts with VPS4B; the interaction is direct. Interacts with CHMP4A, CHMP4B and CHMP4C. Interacts with SNF8, VPS25 and VPS36. ISGylated in a CHMP5-dependent manner. Isgylation weakens its interaction with VPS4A.

It localises to the endomembrane system. The protein resides in the endosome membrane. The protein localises to the late endosome membrane. Its subcellular location is the membrane. Its function is as follows. Probable core component of the endosomal sorting required for transport complex III (ESCRT-III) which is involved in multivesicular bodies (MVBs) formation and sorting of endosomal cargo proteins into MVBs. MVBs contain intraluminal vesicles (ILVs) that are generated by invagination and scission from the limiting membrane of the endosome and mostly are delivered to lysosomes enabling degradation of membrane proteins, such as stimulated growth factor receptors, lysosomal enzymes and lipids. The MVB pathway appears to require the sequential function of ESCRT-O, -I,-II and -III complexes. ESCRT-III proteins mostly dissociate from the invaginating membrane before the ILV is released. The ESCRT machinery also functions in topologically equivalent membrane fission events, such as the terminal stages of cytokinesis. ESCRT-III proteins are believed to mediate the necessary vesicle extrusion and/or membrane fission activities, possibly in conjunction with the AAA ATPase VPS4. In the ESCRT-III complex, it probably serves as an acceptor for the ESCRT-II complex on endosomal membranes. In Mus musculus (Mouse), this protein is Charged multivesicular body protein 6 (Chmp6).